Here is a 176-residue protein sequence, read N- to C-terminus: Calcineurin subunit B type 2 (176 aa).

The N-myristoyl glycine moiety is linked to residue G2. EF-hand domains lie at 18-53 (DEIK…QQNP), 57-85 (RVID…FSVK), 87-122 (DEEQ…MVGN), and 128-163 (QLQQ…MEIH). The Ca(2+) site is built by D31, D33, S35, S37, E42, D63, D65, N67, E69, E74, D100, D102, D104, and E111. A calcineurin A binding region spans residues 131–136 (QLVDKS). Positions 141, 143, 145, 147, and 152 each coordinate Ca(2+).

Belongs to the calcineurin regulatory subunit family. Forms a complex composed of a calmodulin-dependent catalytic subunit (also known as calcineurin A) and a regulatory Ca(2+)-binding subunit (also known as calcineurin B). There are three catalytic subunits, each encoded by a separate gene (PPP3CA, PPP3CB, and PPP3CC) and two regulatory subunits which are also encoded by separate genes (PPP3R1 and PPP3R2). Interacts with SPATA33 (via PQIIIT motif). As to expression, testis specific.

The protein localises to the mitochondrion. Regulatory subunit of calcineurin, a calcium-dependent, calmodulin stimulated protein phosphatase. Confers calcium sensitivity. The sequence is that of Calcineurin subunit B type 2 (Ppp3r2) from Rattus norvegicus (Rat).